The sequence spans 438 residues: Aspartate--tRNA(Asp/Asn) ligase (438 aa).

Position 176 (Glu-176) interacts with L-aspartate. Residues 198-201 are aspartate; the sequence is QLYK. Arg-220 lines the L-aspartate pocket. Residues 220-222, 228-230, and Glu-361 each bind ATP; these read RAE and RHL. Mg(2+) is bound by residues Glu-361 and Ser-364. Positions 364 and 368 each coordinate L-aspartate. Residue 409–412 participates in ATP binding; it reads GADR.

Belongs to the class-II aminoacyl-tRNA synthetase family. Type 2 subfamily. As to quaternary structure, homodimer. The cofactor is Mg(2+).

The protein resides in the cytoplasm. The catalysed reaction is tRNA(Asx) + L-aspartate + ATP = L-aspartyl-tRNA(Asx) + AMP + diphosphate. Its function is as follows. Aspartyl-tRNA synthetase with relaxed tRNA specificity since it is able to aspartylate not only its cognate tRNA(Asp) but also tRNA(Asn). Reaction proceeds in two steps: L-aspartate is first activated by ATP to form Asp-AMP and then transferred to the acceptor end of tRNA(Asp/Asn). This Methanococcus vannielii (strain ATCC 35089 / DSM 1224 / JCM 13029 / OCM 148 / SB) protein is Aspartate--tRNA(Asp/Asn) ligase.